Here is a 416-residue protein sequence, read N- to C-terminus: CinA-like protein (416 aa).

It belongs to the CinA family.

The chain is CinA-like protein from Syntrophomonas wolfei subsp. wolfei (strain DSM 2245B / Goettingen).